Here is a 576-residue protein sequence, read N- to C-terminus: Dihydroxy-acid dehydratase (576 aa).

Cys56 lines the [2Fe-2S] cluster pocket. Residue Asp88 coordinates Mg(2+). Cys129 provides a ligand contact to [2Fe-2S] cluster. Asp130 and Lys131 together coordinate Mg(2+). Lys131 carries the post-translational modification N6-carboxylysine. Cys201 contributes to the [2Fe-2S] cluster binding site. Residue Glu453 participates in Mg(2+) binding. Ser479 functions as the Proton acceptor in the catalytic mechanism.

It belongs to the IlvD/Edd family. As to quaternary structure, homodimer. Requires [2Fe-2S] cluster as cofactor. Mg(2+) is required as a cofactor.

It catalyses the reaction (2R)-2,3-dihydroxy-3-methylbutanoate = 3-methyl-2-oxobutanoate + H2O. The enzyme catalyses (2R,3R)-2,3-dihydroxy-3-methylpentanoate = (S)-3-methyl-2-oxopentanoate + H2O. It functions in the pathway amino-acid biosynthesis; L-isoleucine biosynthesis; L-isoleucine from 2-oxobutanoate: step 3/4. The protein operates within amino-acid biosynthesis; L-valine biosynthesis; L-valine from pyruvate: step 3/4. Functionally, functions in the biosynthesis of branched-chain amino acids. Catalyzes the dehydration of (2R,3R)-2,3-dihydroxy-3-methylpentanoate (2,3-dihydroxy-3-methylvalerate) into 2-oxo-3-methylpentanoate (2-oxo-3-methylvalerate) and of (2R)-2,3-dihydroxy-3-methylbutanoate (2,3-dihydroxyisovalerate) into 2-oxo-3-methylbutanoate (2-oxoisovalerate), the penultimate precursor to L-isoleucine and L-valine, respectively. This Parvibaculum lavamentivorans (strain DS-1 / DSM 13023 / NCIMB 13966) protein is Dihydroxy-acid dehydratase.